A 36-amino-acid chain; its full sequence is Photosystem II reaction center protein M (36 aa).

A helical membrane pass occupies residues 5–25 (ILGLIATALFIIIPTSFLLIL).

It belongs to the PsbM family. In terms of assembly, PSII is composed of 1 copy each of membrane proteins PsbA, PsbB, PsbC, PsbD, PsbE, PsbF, PsbH, PsbI, PsbJ, PsbK, PsbL, PsbM, PsbT, PsbX, PsbY, PsbZ, Psb30/Ycf12, at least 3 peripheral proteins of the oxygen-evolving complex and a large number of cofactors. It forms dimeric complexes.

Its subcellular location is the plastid. The protein localises to the chloroplast thylakoid membrane. Its function is as follows. One of the components of the core complex of photosystem II (PSII). PSII is a light-driven water:plastoquinone oxidoreductase that uses light energy to abstract electrons from H(2)O, generating O(2) and a proton gradient subsequently used for ATP formation. It consists of a core antenna complex that captures photons, and an electron transfer chain that converts photonic excitation into a charge separation. This subunit is found at the monomer-monomer interface. In Chlorokybus atmophyticus (Soil alga), this protein is Photosystem II reaction center protein M.